Reading from the N-terminus, the 110-residue chain is MDKNEILSKLYNVIEDRKNNPIEGSYTNYLFEKGIDKILKKVGEETTEVIIASKDDNKEDLINEICDVIYHTLVLLNYKNIKLEDIEKELQKRNEKILNKKQERRPIENI.

This sequence belongs to the PRA-PH family.

Its subcellular location is the cytoplasm. It carries out the reaction 1-(5-phospho-beta-D-ribosyl)-ATP + H2O = 1-(5-phospho-beta-D-ribosyl)-5'-AMP + diphosphate + H(+). Its pathway is amino-acid biosynthesis; L-histidine biosynthesis; L-histidine from 5-phospho-alpha-D-ribose 1-diphosphate: step 2/9. The chain is Phosphoribosyl-ATP pyrophosphatase (hisE) from Clostridium acetobutylicum (strain ATCC 824 / DSM 792 / JCM 1419 / IAM 19013 / LMG 5710 / NBRC 13948 / NRRL B-527 / VKM B-1787 / 2291 / W).